Consider the following 319-residue polypeptide: HTH-type transcriptional regulator YidZ (319 aa).

In terms of domain architecture, HTH lysR-type spans 8–65 (LDLNLLLCLQLLMQERSVTKAAKRMNVTPSAVSKSLAKLRAWFDDPLFVNSPLGLSPT). Residues 25-44 (VTKAAKRMNVTPSAVSKSLA) constitute a DNA-binding region (H-T-H motif).

This sequence belongs to the LysR transcriptional regulatory family.

In terms of biological role, involved in anaerobic NO protection. The sequence is that of HTH-type transcriptional regulator YidZ from Escherichia coli O139:H28 (strain E24377A / ETEC).